The primary structure comprises 344 residues: Acireductone dioxygenase (344 aa).

Positions 92, 94, 98, and 137 each coordinate Fe(2+). Residues histidine 92, histidine 94, glutamate 98, and histidine 137 each contribute to the Ni(2+) site.

The protein belongs to the acireductone dioxygenase (ARD) family. Fe(2+) is required as a cofactor. Requires Ni(2+) as cofactor.

The protein localises to the cytoplasm. Its subcellular location is the nucleus. It carries out the reaction 1,2-dihydroxy-5-(methylsulfanyl)pent-1-en-3-one + O2 = 4-methylsulfanyl-2-oxobutanoate + formate + 2 H(+). It catalyses the reaction 1,2-dihydroxy-5-(methylsulfanyl)pent-1-en-3-one + O2 = 3-(methylsulfanyl)propanoate + CO + formate + 2 H(+). Its pathway is amino-acid biosynthesis; L-methionine biosynthesis via salvage pathway; L-methionine from S-methyl-5-thio-alpha-D-ribose 1-phosphate: step 5/6. In terms of biological role, catalyzes 2 different reactions between oxygen and the acireductone 1,2-dihydroxy-3-keto-5-methylthiopentene (DHK-MTPene) depending upon the metal bound in the active site. Fe-containing acireductone dioxygenase (Fe-ARD) produces formate and 2-keto-4-methylthiobutyrate (KMTB), the alpha-ketoacid precursor of methionine in the methionine recycle pathway. Ni-containing acireductone dioxygenase (Ni-ARD) produces methylthiopropionate, carbon monoxide and formate, and does not lie on the methionine recycle pathway. This is Acireductone dioxygenase from Leishmania braziliensis.